A 239-amino-acid chain; its full sequence is tRNA (guanine-N(1)-)-methyltransferase (239 aa).

Residues Gly-108 and Leu-127 to Leu-132 contribute to the S-adenosyl-L-methionine site.

This sequence belongs to the RNA methyltransferase TrmD family. As to quaternary structure, homodimer.

Its subcellular location is the cytoplasm. The catalysed reaction is guanosine(37) in tRNA + S-adenosyl-L-methionine = N(1)-methylguanosine(37) in tRNA + S-adenosyl-L-homocysteine + H(+). Functionally, specifically methylates guanosine-37 in various tRNAs. The protein is tRNA (guanine-N(1)-)-methyltransferase of Streptococcus pneumoniae serotype 19F (strain G54).